Reading from the N-terminus, the 263-residue chain is uncharacterized protein (263 aa).

Residue 16-23 participates in ATP binding; that stretch reads AKGGTGKT.

To M.jannaschii MJ0547 and MJ0169.

This is an uncharacterized protein from Methanocaldococcus jannaschii (strain ATCC 43067 / DSM 2661 / JAL-1 / JCM 10045 / NBRC 100440) (Methanococcus jannaschii).